Here is a 780-residue protein sequence, read N- to C-terminus: ATP-dependent 6-phosphofructokinase, muscle type (780 aa).

Threonine 2 is subject to N-acetylthreonine. The tract at residues 2-390 is N-terminal catalytic PFK domain 1; sequence THEEHHATKT…NWEVYKLLAH (389 aa). ATP contacts are provided by residues glycine 25, 88-89, and 118-121; these read RC and GDGS. Aspartate 119 provides a ligand contact to Mg(2+). Serine 133 is modified (phosphoserine). Residues 164–166, arginine 201, 208–210, glutamate 264, arginine 292, and 298–301 contribute to the substrate site; these read SID, MGR, and HVQR. The active-site Proton acceptor is the aspartate 166. Serine 377 carries the phosphoserine modification. Positions 391-401 are interdomain linker; it reads VRPPVSKSGSH. The tract at residues 402 to 780 is C-terminal regulatory PFK domain 2; that stretch reads TVAVMNVGAP…TRKRSGEAAV (379 aa). Residues arginine 471 and 528–532 each bind beta-D-fructose 2,6-bisphosphate; that span reads TVSNN. A glycan (O-linked (GlcNAc) serine) is linked at serine 530. N6-(2-hydroxyisobutyryl)lysine is present on lysine 557. Beta-D-fructose 2,6-bisphosphate-binding positions include arginine 566, 573-575, glutamate 629, arginine 655, and 661-664; these read MGG and HMQQ. Serine 667 carries the phosphoserine modification. A beta-D-fructose 2,6-bisphosphate-binding site is contributed by arginine 735. A Phosphoserine modification is found at serine 775.

It belongs to the phosphofructokinase type A (PFKA) family. ATP-dependent PFK group I subfamily. Eukaryotic two domain clade 'E' sub-subfamily. In terms of assembly, homo- and heterotetramers. Phosphofructokinase (PFK) enzyme functions as a tetramer composed of different combinations of 3 types of subunits, called PFKM (M), PFKL (L) and PFKP (P). The composition of the PFK tetramer differs according to the tissue type it is present in. The kinetic and regulatory properties of the tetrameric enzyme are dependent on the subunit composition, hence can vary across tissues. Interacts (via C-terminus) with HK1 (via N-terminal spermatogenic cell-specific region). The cofactor is Mg(2+). GlcNAcylation decreases enzyme activity.

It is found in the cytoplasm. It carries out the reaction beta-D-fructose 6-phosphate + ATP = beta-D-fructose 1,6-bisphosphate + ADP + H(+). Its pathway is carbohydrate degradation; glycolysis; D-glyceraldehyde 3-phosphate and glycerone phosphate from D-glucose: step 3/4. Its activity is regulated as follows. Allosterically activated by ADP, AMP, or fructose 2,6-bisphosphate, and allosterically inhibited by ATP or citrate. Functionally, catalyzes the phosphorylation of D-fructose 6-phosphate to fructose 1,6-bisphosphate by ATP, the first committing step of glycolysis. The sequence is that of ATP-dependent 6-phosphofructokinase, muscle type (PFKM) from Pongo abelii (Sumatran orangutan).